Consider the following 136-residue polypeptide: Cell wall synthesis protein CwsA (136 aa).

The chain crosses the membrane as a helical span at residues 94–114; that stretch reads LLIAAVAVTVLGGGAAAFSIV.

The protein belongs to the CwsA family. In terms of assembly, interacts with CrgA and Wag31.

Its subcellular location is the cell membrane. In terms of biological role, required for regulated cell division, cell wall synthesis and the maintenance of cell shape. This chain is Cell wall synthesis protein CwsA, found in Mycolicibacterium smegmatis (strain ATCC 700084 / mc(2)155) (Mycobacterium smegmatis).